The sequence spans 134 residues: Small ribosomal subunit protein uS8c (134 aa).

This sequence belongs to the universal ribosomal protein uS8 family. Part of the 30S ribosomal subunit.

Its subcellular location is the plastid. It is found in the chloroplast. In terms of biological role, one of the primary rRNA binding proteins, it binds directly to 16S rRNA central domain where it helps coordinate assembly of the platform of the 30S subunit. This chain is Small ribosomal subunit protein uS8c (rps8), found in Phaseolus vulgaris (Kidney bean).